The sequence spans 340 residues: tRNA-specific 2-thiouridylase MnmA (340 aa).

ATP is bound by residues 6 to 13 (AMSGGVDS) and Met-32. The active-site Nucleophile is the Cys-92. Residues Cys-92 and Cys-186 are joined by a disulfide bond. An ATP-binding site is contributed by Gly-116. The tract at residues 134 to 136 (KDQ) is interaction with tRNA. The Cysteine persulfide intermediate role is filled by Cys-186. The interval 288 to 289 (RY) is interaction with tRNA.

Belongs to the MnmA/TRMU family.

Its subcellular location is the cytoplasm. The catalysed reaction is S-sulfanyl-L-cysteinyl-[protein] + uridine(34) in tRNA + AH2 + ATP = 2-thiouridine(34) in tRNA + L-cysteinyl-[protein] + A + AMP + diphosphate + H(+). Functionally, catalyzes the 2-thiolation of uridine at the wobble position (U34) of tRNA, leading to the formation of s(2)U34. The sequence is that of tRNA-specific 2-thiouridylase MnmA from Campylobacter concisus (strain 13826).